Consider the following 375-residue polypeptide: Nucleosome assembly protein 1-like 4 (375 aa).

The disordered stretch occupies residues 1-31; it reads MADHSFSDGVPSDSVEAAKNASNTEKLTDQV. An N-acetylalanine modification is found at Ala2. Residues Ser5, Ser7, and Ser12 each carry the phosphoserine modification. Over residues 20 to 31 the composition is skewed to polar residues; the sequence is NASNTEKLTDQV. Phosphothreonine is present on Thr51. Phosphoserine occurs at positions 53 and 54. A Phosphothreonine modification is found at Thr58. Lys105 is modified (N6-acetyllysine). A disordered region spans residues 116–137; sequence PTDAESEWHSENEEEEKLAGDM. Over residues 121 to 137 the composition is skewed to basic and acidic residues; that stretch reads SEWHSENEEEEKLAGDM. At Ser125 the chain carries Phosphoserine. The residue at position 146 (Lys146) is an N6-acetyllysine. The short motif at 265–271 is the Nuclear localization signal element; that stretch reads IKKKQKH. At Ser304 the chain carries Phosphoserine. A disordered region spans residues 339–375; that stretch reads AIEDDDNFEEGEEGEEEELEGDEEGEDEDDAEINPKV.

Belongs to the nucleosome assembly protein (NAP) family. Interacts with core (H2A, CD2APH2B, H3, H4) and linker (H1) histones. As to quaternary structure, (Microbial infection) Interacts with Chikungunya virus non-structural protein 3 (via C-terminus). Phosphorylated at the G0/G1 boundary but it is not phosphorylated in S-phase. Phosphorylated protein remains in the cytoplasm in a complex with histones during the G0/G1 transition, whereas dephosphorylation triggers its transport into the nucleus at the G1/S-boundary. In terms of processing, polyglutamylated by TTLL4, a modification that occurs exclusively on glutamate residues and results in polyglutamate chains on the gamma-carboxyl group. Some residues may also be monoglycylated but not polyglycylated due to the absence of functional TTLL10 in human. Ubiquitous. Biallelically expressed in fetal and adult tissues. Highest levels in testis.

It is found in the nucleus. It localises to the cytoplasm. Functionally, acts as a histone chaperone in nucleosome assembly. The sequence is that of Nucleosome assembly protein 1-like 4 from Homo sapiens (Human).